A 295-amino-acid chain; its full sequence is Cytidine deaminase (295 aa).

CMP/dCMP-type deaminase domains follow at residues 48-168 (TDNQ…FGPS) and 187-295 (EDDD…YLSL). A substrate-binding site is contributed by 89–91 (NME). Position 102 (histidine 102) interacts with Zn(2+). Glutamate 104 functions as the Proton donor in the catalytic mechanism. Residues cysteine 129 and cysteine 132 each coordinate Zn(2+).

The protein belongs to the cytidine and deoxycytidylate deaminase family. As to quaternary structure, homodimer. It depends on Zn(2+) as a cofactor.

The enzyme catalyses cytidine + H2O + H(+) = uridine + NH4(+). It catalyses the reaction 2'-deoxycytidine + H2O + H(+) = 2'-deoxyuridine + NH4(+). Functionally, this enzyme scavenges exogenous and endogenous cytidine and 2'-deoxycytidine for UMP synthesis. The sequence is that of Cytidine deaminase from Vibrio vulnificus (strain CMCP6).